The sequence spans 383 residues: Succinyl-diaminopimelate desuccinylase (383 aa).

His73 serves as a coordination point for Zn(2+). Asp75 is an active-site residue. A Zn(2+)-binding site is contributed by Asp107. Catalysis depends on Glu141, which acts as the Proton acceptor. Residues Glu142, Glu170, and His356 each contribute to the Zn(2+) site.

It belongs to the peptidase M20A family. DapE subfamily. As to quaternary structure, homodimer. The cofactor is Zn(2+). Requires Co(2+) as cofactor.

The enzyme catalyses N-succinyl-(2S,6S)-2,6-diaminopimelate + H2O = (2S,6S)-2,6-diaminopimelate + succinate. The protein operates within amino-acid biosynthesis; L-lysine biosynthesis via DAP pathway; LL-2,6-diaminopimelate from (S)-tetrahydrodipicolinate (succinylase route): step 3/3. Catalyzes the hydrolysis of N-succinyl-L,L-diaminopimelic acid (SDAP), forming succinate and LL-2,6-diaminopimelate (DAP), an intermediate involved in the bacterial biosynthesis of lysine and meso-diaminopimelic acid, an essential component of bacterial cell walls. This Pseudomonas syringae pv. tomato (strain ATCC BAA-871 / DC3000) protein is Succinyl-diaminopimelate desuccinylase.